The primary structure comprises 1400 residues: DNA-directed RNA polymerase subunit beta (1400 aa).

The protein belongs to the RNA polymerase beta chain family. As to quaternary structure, the RNAP catalytic core consists of 2 alpha, 1 beta, 1 beta' and 1 omega subunit. When a sigma factor is associated with the core the holoenzyme is formed, which can initiate transcription.

The catalysed reaction is RNA(n) + a ribonucleoside 5'-triphosphate = RNA(n+1) + diphosphate. In terms of biological role, DNA-dependent RNA polymerase catalyzes the transcription of DNA into RNA using the four ribonucleoside triphosphates as substrates. The polypeptide is DNA-directed RNA polymerase subunit beta (Acidiphilium cryptum (strain JF-5)).